The following is a 1588-amino-acid chain: MLPPKHLSATKPKKSWAPNLYELDSDLTKEPDVIIGEGPTDSEFFHQRFRNLIYVEFVGPRKTLIKLRNLCLDWLQPETRTKEEIIELLVLEQYLTIIPEKLKPWVRAKKPENCEKLVTLLENYKEMYQPEDDNNSDVTSDDDMTRNRRESSPPHSVHSFSDRDWDRRGRSRDMEPRDRWSHTRNPRSRMPPRDLSLPVVAKTSFEMDREDDRDSRAYESRSQDAESYQNVVDLAEDRKPHNTIQDNMENYRKLLSLVQLAEDDGHSHMTQGHSSRSKRSAYPSTSRGLKTMPEAKKSTHRRGICEDESSHGVIMEKFIKDVSRSSKSGRARESSDRSQRFPRMSDDNWKDISLNKRESVIQQRVYEGNAFRGGFRFNSTLVSRKRVLERKRRYHFDTDGKGSIHDQKGCPRKKPFECGSEMRKAMSVSSLSSLSSPSFTESQPIDFGAMPYVCDECGRSFSVISEFVEHQIMHTRENLYEYGESFIHSVAVSEVQKSQVGGKRFECKDCGETFNKSAALAEHRKIHARGYLVECKNQECEEAFMPSPTFSELQKIYGKDKFYECRVCKETFLHSSALIEHQKIHFGDDKDNEREHERERERERGETFRPSPALNEFQKMYGKEKMYECKVCGETFLHSSSLKEHQKIHTRGNPFENKGKVCEETFIPGQSLKRRQKTYNKEKLCDFTDGRDAFMQSSELSEHQKIHSRKNLFEGRGYEKSVIHSGPFTESQKSHTITRPLESDEDEKAFTISSNPYENQKIPTKENVYEAKSYERSVIHSLASVEAQKSHSVAGPSKPKVMAESTIQSFDAINHQRVRAGGNTSEGREYSRSVIHSLVASKPPRSHNGNELVESNEKGESSIYISDLNDKRQKIPARENPCEGGSKNRNYEDSVIQSVFRAKPQKSVPGEGSGEFKKDGEFSVPSSNVREYQKARAKKKYIEHRSNETSVIHSLPFGEQTFRPRGMLYECQECGECFAHSSDLTEHQKIHDREKPSGSRNYEWSVIRSLAPTDPQTSYAQEQYAKEQARNKCKDFRQFFATSEDLNTNQKIYDQEKSHGEESQGENTDGEETHSEETHGQETIEDPVIQGSDMEDPQKDDPDDKIYECEDCGLGFVDLTDLTDHQKVHSRKCLVDSREYTHSVIHTHSISEYQRDYTGEQLYECPKCGESFIHSSFLFEHQRIHEQDQLYSMKGCDDGFIALLPMKPRRNRAAERNPALAGSAIRCLLCGQGFIHSSALNEHMRLHREDDLLEQSQMAEEAIIPGLALTEFQRSQTEERLFECAVCGESFVNPAELADHVTVHKNEPYEYGSSYTHTSFLTEPLKGAIPFYECKDCGKSFIHSTVLTKHKELHLEEEEEDEAAAAAAAAAQEVEANVHVPQVVLRIQGLNVEAAEPEVEAAEPEVEAAEPEVEAAEPNGEAEGPDGEAAEPIGEAGQPNGEAEQPNGDADEPDGAGIEDPEERAEEPEGKAEEPEGDADEPDGVGIEDPEEGEDQEIQVEEPYYDCHECTETFTSSTAFSEHLKTHASMIIFEPANAFGECSGYIERASTSTGGANQADEKYFKCDVCGQLFNDRLSLARHQNTHTG.

The 83-residue stretch at 46 to 128 folds into the SCAN box domain; that stretch reads HQRFRNLIYV…TLLENYKEMY (83 aa). Disordered stretches follow at residues 128 to 231, 265 to 304, and 317 to 347; these read YQPE…YQNV, GHSHMTQGHSSRSKRSAYPSTSRGLKTMPEAKKSTHRRGI, and KFIKDVSRSSKSGRARESSDRSQRFPRMSDD. Over residues 129 to 142 the composition is skewed to acidic residues; that stretch reads QPEDDNNSDVTSDD. 4 stretches are compositionally biased toward basic and acidic residues: residues 143-152, 160-181, 205-224, and 293-304; these read DMTRNRRESS, FSDRDWDRRGRSRDMEPRDRWS, FEMDREDDRDSRAYESRSQD, and PEAKKSTHRRGI. 3 C2H2-type zinc fingers span residues 452 to 474, 505 to 527, and 563 to 585; these read YVCDECGRSFSVISEFVEHQIMH, FECKDCGETFNKSAALAEHRKIH, and YECRVCKETFLHSSALIEHQKIH. The segment covering 588–607 has biased composition (basic and acidic residues); the sequence is DDKDNEREHERERERERGET. The tract at residues 588–608 is disordered; it reads DDKDNEREHERERERERGETF. A C2H2-type 4 zinc finger spans residues 627–649; it reads YECKVCGETFLHSSSLKEHQKIH. Disordered stretches follow at residues 839–889 and 905–929; these read VASK…SKNR and QKSVPGEGSGEFKKDGEFSVPSSNV. Basic and acidic residues predominate over residues 868-881; it reads LNDKRQKIPARENP. The C2H2-type 5 zinc-finger motif lies at 969–991; sequence YECQECGECFAHSSDLTEHQKIH. The segment at 1056–1104 is disordered; it reads EKSHGEESQGENTDGEETHSEETHGQETIEDPVIQGSDMEDPQKDDPDD. The segment covering 1071-1082 has biased composition (basic and acidic residues); sequence EETHSEETHGQE. 5 consecutive C2H2-type zinc fingers follow at residues 1107–1129, 1163–1185, 1225–1247, 1282–1304, and 1332–1354; these read YECEDCGLGFVDLTDLTDHQKVH, YECPKCGESFIHSSFLFEHQRIH, IRCLLCGQGFIHSSALNEHMRLH, FECAVCGESFVNPAELADHVTVH, and YECKDCGKSFIHSTVLTKHKELH. Acidic residues predominate over residues 1396-1415; that stretch reads EPEVEAAEPEVEAAEPEVEA. The disordered stretch occupies residues 1396-1495; sequence EPEVEAAEPE…GIEDPEEGED (100 aa). Repeat copies occupy residues 1397 to 1403, 1404 to 1410, 1411 to 1417, 1418 to 1422, 1425 to 1429, 1432 to 1436, and 1439 to 1443. Residues 1397–1417 are 3 X 7 AA repeat of P-E-V-E-A-A-E; the sequence is PEVEAAEPEVEAAEPEVEAAE. A 4 X 5 AA repeat of P-X-G-E-A region spans residues 1418–1443; it reads PNGEAEGPDGEAAEPIGEAGQPNGEA. Composition is skewed to acidic residues over residues 1449–1466 and 1475–1495; these read DADEPDGAGIEDPEERAE and PEGDADEPDGVGIEDPEEGED. C2H2-type zinc fingers lie at residues 1505 to 1527 and 1564 to 1586; these read YDCHECTETFTSSTAFSEHLKTH and FKCDVCGQLFNDRLSLARHQNTH.

This sequence belongs to the krueppel C2H2-type zinc-finger protein family. In terms of assembly, homodimer. Interacts with SIAH1A and SIAH2. Interacts with TRAF2. Brain, glial cells, astrocytes, embryo, placenta, testis, ovary and uterus. In the placenta it is found in the layer of villous cytotrophoblast cells while in the ovary it is found in the cells of the ovarian stroma including the thecal layers around the follicles. Expression is highly repressed in glioma cell lines.

Its subcellular location is the nucleus. The protein resides in the cytoplasm. Its function is as follows. Induces apoptosis in cooperation with SIAH1A. Acts as a mediator between p53/TP53 and BAX in a neuronal death pathway that is activated by DNA damage. Acts synergistically with TRAF2 and inhibits TNF induced apoptosis through activation of NF-kappa-B. Possesses a tumor suppressing activity in glioma cells. The protein is Paternally-expressed gene 3 protein (PEG3) of Homo sapiens (Human).